A 61-amino-acid polypeptide reads, in one-letter code: Large ribosomal subunit protein uL30 (61 aa).

It belongs to the universal ribosomal protein uL30 family. In terms of assembly, part of the 50S ribosomal subunit.

The sequence is that of Large ribosomal subunit protein uL30 from Lactobacillus acidophilus (strain ATCC 700396 / NCK56 / N2 / NCFM).